A 163-amino-acid chain; its full sequence is Myosin light chain 2 (163 aa).

2 consecutive EF-hand domains span residues 15–50 (DYIN…LGKT) and 92–127 (PERE…AGFE). Residues Asp28, Asp30, Asp32, and Asp39 each coordinate Ca(2+).

Interacts with the IQ domain of MYO1.

The protein localises to the bud neck. In terms of biological role, regulatory light chain for the class II conventional myosin MYO1. May play a role in the disassembly of the MYO1 ring at the bud neck at the end of its contraction during cytokinesis. This is Myosin light chain 2 (MLC2) from Saccharomyces cerevisiae (strain ATCC 204508 / S288c) (Baker's yeast).